We begin with the raw amino-acid sequence, 78 residues long: Cell division topological specificity factor (78 aa).

This sequence belongs to the MinE family.

Its function is as follows. Prevents the cell division inhibition by proteins MinC and MinD at internal division sites while permitting inhibition at polar sites. This ensures cell division at the proper site by restricting the formation of a division septum at the midpoint of the long axis of the cell. In Helicobacter hepaticus (strain ATCC 51449 / 3B1), this protein is Cell division topological specificity factor.